We begin with the raw amino-acid sequence, 156 residues long: Hexachlorocyclohexane dehydrochlorinase 2 (156 aa).

Aspartate 25 is an active-site residue. Histidine 73 acts as the Proton acceptor in catalysis.

It belongs to the HCH dehydrochlorinase family. As to quaternary structure, homotrimer.

It localises to the periplasm. It carries out the reaction gamma-hexachlorocyclohexane = (3R,4S,5S,6R)-pentachlorocyclohexene + chloride + H(+). It catalyses the reaction (3R,4S,5S,6R)-pentachlorocyclohexene = (3R,6R)-1,3,4,6-tetrachlorocyclohexa-1,4-diene + chloride + H(+). Its pathway is xenobiotic degradation; hexachlorocyclohexane degradation. In terms of biological role, catalyzes the conversion of the important environmental pollutant gamma-hexachlorocyclohexane (gamma-HCH or lindane) to 1,3,4,6-tetrachloro-1,4-cyclohexadiene (1,4-TCDN) via gamma-pentachlorocyclohexene (gamma-PCCH). Proceeds by two successive 1,2-anti conformationally dependent dehydrochlorinations. Also shows activity with alpha- and delta-HCH, giving alpha- and delta-PCCH respectively, but not with the beta isomer. This is Hexachlorocyclohexane dehydrochlorinase 2 from Sphingobium indicum (strain DSM 16412 / CCM 7286 / MTCC 6364 / B90A).